The following is a 347-amino-acid chain: Phenylalanine--tRNA ligase alpha subunit (347 aa).

E261 contacts Mg(2+).

It belongs to the class-II aminoacyl-tRNA synthetase family. Phe-tRNA synthetase alpha subunit type 1 subfamily. In terms of assembly, tetramer of two alpha and two beta subunits. Mg(2+) is required as a cofactor.

It localises to the cytoplasm. It catalyses the reaction tRNA(Phe) + L-phenylalanine + ATP = L-phenylalanyl-tRNA(Phe) + AMP + diphosphate + H(+). This chain is Phenylalanine--tRNA ligase alpha subunit, found in Streptococcus pyogenes serotype M18 (strain MGAS8232).